We begin with the raw amino-acid sequence, 43 residues long: uncharacterized protein (43 aa).

This is an uncharacterized protein from Rickettsia prowazekii (strain Madrid E).